Here is a 1873-residue protein sequence, read N- to C-terminus: Voltage-dependent L-type calcium channel subunit alpha-1S (1873 aa).

Positions Met-1 to Val-23 are disordered. The Cytoplasmic portion of the chain corresponds to Met-1–Lys-51. One copy of the I repeat lies at Asn-38–Phe-337. Residues Pro-52 to Val-70 form a helical membrane-spanning segment. Residues Tyr-71–Gly-85 are Extracellular-facing. N-linked (GlcNAc...) asparagine glycosylation is present at Asn-79. Residues Leu-86–Ile-106 traverse the membrane as a helical segment. The Cytoplasmic segment spans residues Ala-107–Asp-115. The chain crosses the membrane as a helical span at residues Ala-116–Thr-136. Topologically, residues Ala-137–Asp-160 are extracellular. Residues Val-161 to Val-179 traverse the membrane as a helical segment. The Cytoplasmic segment spans residues Pro-180 to Leu-196. The chain crosses the membrane as a helical span at residues Phe-197–Phe-218. Topologically, residues Lys-219 to Gly-279 are extracellular. 2 cysteine pairs are disulfide-bonded: Cys-226/Cys-254 and Cys-245/Cys-261. Asn-257 carries an N-linked (GlcNAc...) asparagine glycan. The segment at residues Phe-280–Val-301 is an intramembrane region (pore-forming). The short motif at Thr-290–Gly-293 is the Selectivity filter of repeat I element. Ca(2+) is bound at residue Glu-292. At Asn-302 to Trp-309 the chain is on the extracellular side. The chain crosses the membrane as a helical span at residues Pro-310–Leu-330. At Gly-331–Arg-432 the chain is on the cytoplasmic side. Residues Gln-357–Glu-374 form a binding to the beta subunit region. Ser-393 and Ser-397 each carry phosphoserine. The stretch at Asn-418–Leu-664 is one II repeat. A helical transmembrane segment spans residues Val-433–Ser-451. Residues Glu-452–His-462 are Extracellular-facing. The helical transmembrane segment at Leu-463–Met-483 threads the bilayer. Residues Tyr-484–Ser-494 lie on the Cytoplasmic side of the membrane. Residues Ile-495 to Val-514 form a helical membrane-spanning segment. Residues Glu-515–Gly-523 are Extracellular-facing. A helical transmembrane segment spans residues Ile-524–Trp-542. Topologically, residues Thr-543–Ser-561 are cytoplasmic. The helical transmembrane segment at Leu-562–Phe-581 threads the bilayer. Over Gly-582–Pro-601 the chain is Extracellular. The segment at residues Gln-602 to Gly-623 is an intramembrane region (pore-forming). The short motif at Thr-612–Asp-615 is the Selectivity filter of repeat II element. Position 614 (Glu-614) interacts with Ca(2+). The Extracellular segment spans residues Ile-624 to Pro-633. The chain crosses the membrane as a helical span at residues Gly-634–Leu-653. Topologically, residues Asn-654–Thr-799 are cytoplasmic. 2 disordered regions span residues Ala-673 to Thr-717 and Glu-731 to Arg-757. At Ser-687 the chain carries Phosphoserine; by PKA. A compositionally biased stretch (basic and acidic residues) spans Leu-690–Gly-711. Residues Pro-742–Glu-751 are compositionally biased toward acidic residues. The tract at residues Glu-747 to Pro-760 is interaction with STAC, STAC2 and STAC3 (via SH3 domains). An III repeat occupies Asn-786–Phe-1068. A helical transmembrane segment spans residues Trp-800–Ala-818. The Extracellular segment spans residues Glu-819–Gln-830. The chain crosses the membrane as a helical span at residues Ile-831–Lys-850. Residues Met-851–Asn-866 lie on the Cytoplasmic side of the membrane. The chain crosses the membrane as a helical span at residues Tyr-867–Leu-885. At Glu-886–Val-892 the chain is on the extracellular side. Residues Val-893–Ala-911 traverse the membrane as a helical segment. Topologically, residues Lys-912–Asn-930 are cytoplasmic. Residues Ile-931 to Phe-950 traverse the membrane as a helical segment. The Extracellular portion of the chain corresponds to Lys-951–Val-1000. Cys-957 and Cys-968 form a disulfide bridge. The tract at residues Arg-988–Lys-1077 is dihydropyridine binding. The segment at residues Leu-1001–Tyr-1021 is an intramembrane region (pore-forming). A Selectivity filter of repeat III motif is present at residues Thr-1012 to Gly-1015. Glu-1014 contributes to the Ca(2+) binding site. Residues Arg-1022–Arg-1038 lie on the Extracellular side of the membrane. A helical membrane pass occupies residues Val-1039–Phe-1060. Residues Val-1061–Ser-1118 lie on the Cytoplasmic side of the membrane. Residues Asn-1105 to Phe-1384 form an IV repeat. A helical membrane pass occupies residues Tyr-1119–Tyr-1140. Residues His-1141–His-1148 lie on the Extracellular side of the membrane. The helical transmembrane segment at Ile-1149 to Leu-1170 threads the bilayer. The Cytoplasmic portion of the chain corresponds to Ala-1171–Asp-1180. Residues Pro-1181–Ser-1200 form a helical membrane-spanning segment. Residues Glu-1201 to Ser-1231 lie on the Extracellular side of the membrane. A helical membrane pass occupies residues Ser-1232–Ala-1250. Over Glu-1251–Pro-1268 the chain is Cytoplasmic. A helical transmembrane segment spans residues Tyr-1269 to Phe-1289. The Extracellular segment spans residues Gly-1290 to Gln-1311. The pore-forming intramembrane region spans Ala-1312–Leu-1330. The Selectivity filter of repeat IV motif lies at Thr-1321–Ala-1324. Topologically, residues Ala-1331 to Phe-1356 are extracellular. Residues Leu-1337–Lys-1403 are dihydropyridine binding. The cysteines at positions 1338 and 1352 are disulfide-linked. Positions Glu-1349 to Trp-1391 are phenylalkylamine binding. The chain crosses the membrane as a helical span at residues Ala-1357–Met-1381. At Asp-1382 to Pro-1873 the chain is on the cytoplasmic side. The segment at Lys-1522 to Glu-1542 is interaction with calmodulin. Phosphoserine; by PKA and CAMK2 is present on Ser-1575. Thr-1579 carries the phosphothreonine; by CK2 modification. The residue at position 1617 (Ser-1617) is a Phosphoserine; by PKA. Disordered regions lie at residues Glu-1689 to Pro-1782 and Gly-1841 to Pro-1873. Low complexity predominate over residues Gly-1847 to Leu-1858.

The protein belongs to the calcium channel alpha-1 subunit (TC 1.A.1.11) family. CACNA1S subfamily. As to quaternary structure, component of a calcium channel complex consisting of a pore-forming alpha subunit (CACNA1S) and the ancillary subunits CACNB1 or CACNB2, CACNG1 and CACNA2D1. The channel complex contains alpha, beta, gamma and delta subunits in a 1:1:1:1 ratio, i.e. it contains either CACNB1 or CACNB2. CACNA1S channel activity is modulated by the auxiliary subunits (CACNB1 or CACNB2, CACNG1 and CACNA2D1). Interacts with DYSF and JSRP1. Interacts with RYR1. Interacts with STAC, STAC2 and STAC3 (via their SH3 domains). Interaction with STAC3 promotes expression at the cell membrane. Interaction with STAC2 promotes expression at the cell membrane, but with much lower efficiency than STAC3. Interaction with STAC1 leads to very low levels expression at the cell membrane, much less than the levels observed upon interaction with STAC3 and STAC2. Interacts with CALM. Post-translationally, the alpha-1S subunit is found in two isoforms in the skeletal muscle: a minor form of 212 kDa containing the complete amino acid sequence, and a major form of 190 kDa derived from the full-length form by post-translational proteolysis close to Phe-1690. In terms of processing, phosphorylated. Phosphorylation by PKA activates the calcium channel. Both the minor and major forms are phosphorylated in vitro by PKA. Phosphorylation at Ser-1575 is involved in beta-adrenergic-mediated regulation of the channel. In terms of tissue distribution, detected in skeletal muscle T-tubules (at protein level).

The protein resides in the cell membrane. It is found in the sarcolemma. Its subcellular location is the T-tubule. It catalyses the reaction Ca(2+)(in) = Ca(2+)(out). Its activity is regulated as follows. Channel activity is blocked by dihydropyridines (DHP), phenylalkylamines, and by benzothiazepines. Its function is as follows. Pore-forming, alpha-1S subunit of the voltage-gated calcium channel that gives rise to L-type calcium currents in skeletal muscle. Calcium channels containing the alpha-1S subunit play an important role in excitation-contraction coupling in skeletal muscle via their interaction with RYR1, which triggers Ca(2+) release from the sarcplasmic reticulum and ultimately results in muscle contraction. Long-lasting (L-type) calcium channels belong to the 'high-voltage activated' (HVA) group. This is Voltage-dependent L-type calcium channel subunit alpha-1S (CACNA1S) from Oryctolagus cuniculus (Rabbit).